The following is a 132-amino-acid chain: MPQQPTKRTGGVRKQKRNVPNGVAHIQSTFNNTIVTISDVAGEVISWASAGSSGFKGAKKGTPFAAQTAAESAARRAIDQGMRQIEVMVSGPGAGRETAIRALQGAGLEITLIRDVTPIPHNGCRPPKRRRV.

The protein belongs to the universal ribosomal protein uS11 family. Part of the 30S ribosomal subunit. Interacts with proteins S7 and S18. Binds to IF-3.

Located on the platform of the 30S subunit, it bridges several disparate RNA helices of the 16S rRNA. Forms part of the Shine-Dalgarno cleft in the 70S ribosome. The chain is Small ribosomal subunit protein uS11 from Cyanothece sp. (strain PCC 7425 / ATCC 29141).